Here is a 1032-residue protein sequence, read N- to C-terminus: Toll-like receptor 9 (1032 aa).

Residues 1–25 (MGPCRGALHPLSLLVQAAALALALA) form the signal peptide. Residues 26–815 (QGTLPAFLPC…QDLRLCLDEA (790 aa)) lie on the Extracellular side of the membrane. Cysteine 35 and cysteine 45 are disulfide-bonded. 47-51 (WLFLK) serves as a coordination point for DNA. LRR repeat units lie at residues 62 to 85 (RGNV…DFVH), 87 to 110 (VHLR…HFPC), 122 to 147 (VPTL…SLVS), 150 to 166 (LSRT…LAGL), 167 to 190 (YALR…ALQV), 198 to 221 (LGNL…LPPS), 223 to 242 (EYLL…DLAN), 243 to 268 (LTAL…CREC), 283 to 306 (LSHL…WFHG), 308 to 332 (GNLM…AFYG), 333 to 356 (LARL…HLHL), 363 to 386 (LLSL…TLQS), 390 to 413 (LPML…IFGA), 415 to 440 (PGLR…TGEV), 472 to 496 (CRTL…MFVR), 498 to 521 (ARLQ…QFVP), 522 to 545 (LSNL…SFTE), 547 to 574 (PRLE…SFVA), 576 to 600 (LPAL…LRSA), 602 to 624 (LRAL…LYLR), 629 to 652 (LRSL…NLDN), 654 to 677 (PKSL…SLAL), 678 to 701 (LPKL…SLPN), 703 to 725 (TQLQ…FFAL), 726 to 749 (AVRL…WFGS), and 751 to 774 (AGAL…TFVD). The N-linked (GlcNAc...) asparagine glycan is linked to asparagine 64. Residues 72–77 (SNRIHH) and 95–109 (KWNC…MHFP) contribute to the DNA site. Cysteine 98 and cysteine 110 form a disulfide bridge. N-linked (GlcNAc...) asparagine glycosylation is present at asparagine 129. DNA contacts are provided by residues tyrosine 132, arginine 152, and 179-181 (YYK). Cysteine 178 and cysteine 184 form a disulfide bridge. Asparagine 200 carries an N-linked (GlcNAc...) asparagine glycan. Residue tyrosine 208 participates in DNA binding. N-linked (GlcNAc...) asparagine glycans are attached at residues asparagine 210 and asparagine 242. Disulfide bonds link cysteine 255–cysteine 268 and cysteine 258–cysteine 265. Cysteine 258 carries the S-palmitoyl cysteine lipid modification. Arginine 262 is a DNA binding site. Cysteine 265 carries S-palmitoyl cysteine lipidation. An N-linked (GlcNAc...) asparagine glycan is attached at asparagine 340. A disulfide bridge links cysteine 472 with cysteine 502. N-linked (GlcNAc...) asparagine glycans are attached at residues asparagine 476 and asparagine 515. Asparagine 569 carries an N-linked (GlcNAc...) asparagine glycan. 3 N-linked (GlcNAc...) asparagine glycosylation sites follow: asparagine 671, asparagine 696, and asparagine 701. A glycan (N-linked (GlcNAc...) asparagine) is linked at asparagine 733. Disulfide bonds link cysteine 766/cysteine 792 and cysteine 768/cysteine 811. The chain crosses the membrane as a helical span at residues 816 to 836 (LSWVCFSLSLLAVALSLAVPM). At 837-1032 (LHQLCGWDLW…QNFCRGPTTA (196 aa)) the chain is on the cytoplasmic side. In terms of domain architecture, TIR spans 868 to 1013 (LAYDAFVVFD…SFWAQLGTAL (146 aa)).

This sequence belongs to the Toll-like receptor family. In terms of assembly, monomer and homodimer. Exists as a monomer in the absence of unmethylated cytidine-phosphate-guanosine (CpG) ligand. Proteolytic processing of an insertion loop (Z-loop) is required for homodimerization upon binding to the unmethylated CpG ligand leading to its activation. Interacts with MYD88 via their respective TIR domains. Interacts with BTK. Interacts (via transmembrane domain) with UNC93B1. Interacts with CD300LH; the interaction may promote full activation of TLR9-triggered innate responses. Interacts with CNPY3 and HSP90B1; this interaction is required for proper folding in the endoplasmic reticulum. Interacts with SMPDL3B. Interacts with CD82; this interaction is essential for TLR9-dependent myddosome formation in response to CpG stimulation. Post-translationally, activated by proteolytic cleavage of the flexible loop between repeats LRR14 and LRR15 within the ectodomain. Cleavage requires UNC93B1. Proteolytically processed by first removing the majority of the ectodomain by either asparagine endopeptidase (AEP) or a cathepsin followed by a trimming event that is solely cathepsin mediated and required for optimal receptor signaling. Palmitoylated by ZDHHC3 in the Golgi regulates TLR9 trafficking from the Golgi to endosomes. Depalmitoylation by PPT1 controls the release of TLR9 from UNC93B1 in endosomes.

It is found in the endoplasmic reticulum membrane. The protein resides in the endosome. It localises to the lysosome. The protein localises to the cytoplasmic vesicle. Its subcellular location is the phagosome. Functionally, key component of innate and adaptive immunity. TLRs (Toll-like receptors) control host immune response against pathogens through recognition of molecular patterns specific to microorganisms. TLR9 is a nucleotide-sensing TLR which is activated by unmethylated cytidine-phosphate-guanosine (CpG) dinucleotides. Acts via MYD88 and TRAF6, leading to NF-kappa-B activation, cytokine secretion and the inflammatory response. Upon CpG stimulation, induces B-cell proliferation, activation, survival and antibody production. This chain is Toll-like receptor 9 (TLR9), found in Canis lupus familiaris (Dog).